Reading from the N-terminus, the 185-residue chain is MLELVYEEAREKMDKAIAALEKGLLRVRTGRASLSMLDGVKLDYYGTPTPINQAATVAIPESRLITIQPWDASVIKDIEKAILKSDLGLNPSNDGKIIRIAIPPLTEDRRKEMVKLVNKMSEEGKISVRNIRRDANETIKSMKKDGDIAEDLAFKGQDEVQKITDDFVKKVDDICAQKEKEILEF.

It belongs to the RRF family.

Its subcellular location is the cytoplasm. In terms of biological role, responsible for the release of ribosomes from messenger RNA at the termination of protein biosynthesis. May increase the efficiency of translation by recycling ribosomes from one round of translation to another. The polypeptide is Ribosome-recycling factor (Desulfatibacillum aliphaticivorans).